The sequence spans 185 residues: Ribosome-recycling factor (185 aa).

The protein belongs to the RRF family.

It is found in the cytoplasm. Its function is as follows. Responsible for the release of ribosomes from messenger RNA at the termination of protein biosynthesis. May increase the efficiency of translation by recycling ribosomes from one round of translation to another. The chain is Ribosome-recycling factor from Vibrio vulnificus (strain YJ016).